Reading from the N-terminus, the 424-residue chain is ATP-sensitive inward rectifier potassium channel 8 (424 aa).

Residues 1–69 (MLARKSIIPE…IFTTLVDLKW (69 aa)) are Cytoplasmic-facing. Residue S6 is modified to Phosphoserine. Residues 70-94 (RHTLVIFTMSFLCSWLLFAIMWWLV) form a helical membrane-spanning segment. Topologically, residues 95–126 (AFAHGDIYAYMEKSGMEKSGLESTVCVTNVRS) are extracellular. The segment at residues 127 to 138 (FTSAFLFSIEVQ) is an intramembrane region (helical; Pore-forming). Residues 139-145 (VTIGFGG) constitute an intramembrane region (pore-forming). The Selectivity filter motif lies at 140-145 (TIGFGG). The Extracellular segment spans residues 146-154 (RMMTEECPL). A helical membrane pass occupies residues 155-176 (AITVLILQNIVGLIINAVMLGC). The Cytoplasmic portion of the chain corresponds to 177 to 424 (IFMKTAQAHR…PEGNQNTSES (248 aa)). The interval 375 to 424 (SHQNSLRKRNSMRRNNSMRRNNSIRRNNSSLMVPKVQFMTPEGNQNTSES) is disordered. Residues 387–404 (RRNNSMRRNNSIRRNNSS) show a composition bias toward low complexity.

It belongs to the inward rectifier-type potassium channel (TC 1.A.2.1) family. KCNJ8 subfamily. Interacts with ABCC9. As to expression, predominantly detected in fetal and adult heart.

The protein resides in the membrane. It catalyses the reaction K(+)(in) = K(+)(out). In terms of biological role, inward rectifier potassium channels are characterized by a greater tendency to allow potassium to flow into the cell rather than out of it. Their voltage dependence is regulated by the concentration of extracellular potassium; as external potassium is raised, the voltage range of the channel opening shifts to more positive voltages. The inward rectification is mainly due to the blockage of outward current by internal magnesium. This channel is activated by internal ATP and can be blocked by external barium. Can form a sulfonylurea-sensitive but ATP-insensitive potassium channel with ABCC9. This Homo sapiens (Human) protein is ATP-sensitive inward rectifier potassium channel 8 (KCNJ8).